The sequence spans 130 residues: D-ribose pyranase (130 aa).

H20 functions as the Proton donor in the catalytic mechanism. Residues D28, H97, and 119-121 (YSN) contribute to the substrate site.

Belongs to the RbsD / FucU family. RbsD subfamily. Homodecamer.

The protein localises to the cytoplasm. It carries out the reaction beta-D-ribopyranose = beta-D-ribofuranose. It participates in carbohydrate metabolism; D-ribose degradation; D-ribose 5-phosphate from beta-D-ribopyranose: step 1/2. In terms of biological role, catalyzes the interconversion of beta-pyran and beta-furan forms of D-ribose. The protein is D-ribose pyranase of Lacticaseibacillus casei (strain BL23) (Lactobacillus casei).